A 360-amino-acid polypeptide reads, in one-letter code: Holliday junction branch migration complex subunit RuvB (360 aa).

A disordered region spans residues 1-46; that stretch reads MAIKRSGNSDRPAKNPSSTPGTNAPTLLSPTPTHQEKETSEEKIRP. The interval 13 to 205 is large ATPase domain (RuvB-L); it reads AKNPSSTPGT…FGLIQRLRFY (193 aa). A compositionally biased stretch (polar residues) spans 15–33; the sequence is NPSSTPGTNAPTLLSPTPT. A compositionally biased stretch (basic and acidic residues) spans 34-46; it reads HQEKETSEEKIRP. Residues Ile-44, Arg-45, Gly-86, Lys-89, Thr-90, Thr-91, 152–154, Arg-195, Tyr-205, and Arg-242 each bind ATP; that span reads EDY. Residue Thr-90 participates in Mg(2+) binding. The segment at 206–276 is small ATPAse domain (RuvB-S); the sequence is EVDELTLIVL…LASEALDIYQ (71 aa). The tract at residues 279-360 is head domain (RuvB-H); it reads KQGLDWIDRL…LTSEEQLSIF (82 aa). The DNA site is built by Arg-334 and Arg-339.

This sequence belongs to the RuvB family. Homohexamer. Forms an RuvA(8)-RuvB(12)-Holliday junction (HJ) complex. HJ DNA is sandwiched between 2 RuvA tetramers; dsDNA enters through RuvA and exits via RuvB. An RuvB hexamer assembles on each DNA strand where it exits the tetramer. Each RuvB hexamer is contacted by two RuvA subunits (via domain III) on 2 adjacent RuvB subunits; this complex drives branch migration. In the full resolvosome a probable DNA-RuvA(4)-RuvB(12)-RuvC(2) complex forms which resolves the HJ.

The protein resides in the cytoplasm. It carries out the reaction ATP + H2O = ADP + phosphate + H(+). Its function is as follows. The RuvA-RuvB-RuvC complex processes Holliday junction (HJ) DNA during genetic recombination and DNA repair, while the RuvA-RuvB complex plays an important role in the rescue of blocked DNA replication forks via replication fork reversal (RFR). RuvA specifically binds to HJ cruciform DNA, conferring on it an open structure. The RuvB hexamer acts as an ATP-dependent pump, pulling dsDNA into and through the RuvAB complex. RuvB forms 2 homohexamers on either side of HJ DNA bound by 1 or 2 RuvA tetramers; 4 subunits per hexamer contact DNA at a time. Coordinated motions by a converter formed by DNA-disengaged RuvB subunits stimulates ATP hydrolysis and nucleotide exchange. Immobilization of the converter enables RuvB to convert the ATP-contained energy into a lever motion, pulling 2 nucleotides of DNA out of the RuvA tetramer per ATP hydrolyzed, thus driving DNA branch migration. The RuvB motors rotate together with the DNA substrate, which together with the progressing nucleotide cycle form the mechanistic basis for DNA recombination by continuous HJ branch migration. Branch migration allows RuvC to scan DNA until it finds its consensus sequence, where it cleaves and resolves cruciform DNA. The polypeptide is Holliday junction branch migration complex subunit RuvB (Rippkaea orientalis (strain PCC 8801 / RF-1) (Cyanothece sp. (strain PCC 8801))).